Here is a 276-residue protein sequence, read N- to C-terminus: 3,4-dihydroxyphenylacetate 2,3-dioxygenase (276 aa).

Requires Fe cation as cofactor.

The catalysed reaction is 3,4-dihydroxyphenylacetate + O2 = 2-hydroxy-5-carboxymethylmuconate semialdehyde + H(+). The protein operates within aromatic compound metabolism; 4-hydroxyphenylacetate degradation; pyruvate and succinate semialdehyde from 4-hydroxyphenylacetate: step 2/7. In terms of biological role, transforms homoprotocatechuic acid (HPC) into 5-carboxymethyl-2-hydroxy-muconic semialdehyde (CHMS). The sequence is that of 3,4-dihydroxyphenylacetate 2,3-dioxygenase (hpcB) from Escherichia coli.